Reading from the N-terminus, the 936-residue chain is Protocadherin gamma-A10 (936 aa).

The first 32 residues, 1–32 (MAAQRNRSKESKDCSGLVLLCLFFGIPWEAGA), serve as a signal peptide directing secretion. Cadherin domains follow at residues 33 to 137 (RQIS…APTF), 138 to 246 (QAEN…APVF), 247 to 351 (TLPE…SPEL), 352 to 456 (TITS…PPTF), 457 to 566 (SQVS…APEI), and 574 to 687 (DGST…SPAN). Residues 33 to 696 (RQISYSIPEE…NSETSDLTLY (664 aa)) are Extracellular-facing. N51 carries an N-linked (GlcNAc...) asparagine glycan. Residues N423 and N549 are each glycosylated (N-linked (GlcNAc...) asparagine). A helical transmembrane segment spans residues 697–717 (LVVAVAAVSCVFLAFVIVLLA). Residues 718–936 (LRLRRWHKSR…KKKSGKKEKK (219 aa)) lie on the Cytoplasmic side of the membrane. Disordered stretches follow at residues 801–845 (SKFP…WPNN) and 906–936 (ATLT…KEKK). A compositionally biased stretch (polar residues) spans 820–845 (WRFSQAQRPGTSGSQNGDDTGTWPNN). Basic residues predominate over residues 926–936 (NKKKSGKKEKK).

Its subcellular location is the cell membrane. Functionally, potential calcium-dependent cell-adhesion protein. May be involved in the establishment and maintenance of specific neuronal connections in the brain. In Pan troglodytes (Chimpanzee), this protein is Protocadherin gamma-A10 (PCDHGA10).